The following is a 189-amino-acid chain: ATP synthase subunit b (189 aa).

Residues 23-43 (IEIVLSLVVFGLLLFAVWKFV) form a helical membrane-spanning segment.

It belongs to the ATPase B chain family. As to quaternary structure, F-type ATPases have 2 components, F(1) - the catalytic core - and F(0) - the membrane proton channel. F(1) has five subunits: alpha(3), beta(3), gamma(1), delta(1), epsilon(1). F(0) has three main subunits: a(1), b(2) and c(10-14). The alpha and beta chains form an alternating ring which encloses part of the gamma chain. F(1) is attached to F(0) by a central stalk formed by the gamma and epsilon chains, while a peripheral stalk is formed by the delta and b chains.

It localises to the cell membrane. Its function is as follows. F(1)F(0) ATP synthase produces ATP from ADP in the presence of a proton or sodium gradient. F-type ATPases consist of two structural domains, F(1) containing the extramembraneous catalytic core and F(0) containing the membrane proton channel, linked together by a central stalk and a peripheral stalk. During catalysis, ATP synthesis in the catalytic domain of F(1) is coupled via a rotary mechanism of the central stalk subunits to proton translocation. In terms of biological role, component of the F(0) channel, it forms part of the peripheral stalk, linking F(1) to F(0). The chain is ATP synthase subunit b from Nocardioides sp. (strain ATCC BAA-499 / JS614).